We begin with the raw amino-acid sequence, 440 residues long: RNA polymerase II C-terminal domain phosphatase-like 4 (440 aa).

Residues 1–36 (MSVASDSPVHSSSSSDDLAAFLDAELDSASDASSGP) show a composition bias toward low complexity. The tract at residues 1 to 49 (MSVASDSPVHSSSSSDDLAAFLDAELDSASDASSGPSEEEEAEDDVESG) is disordered. Positions 37–47 (SEEEEAEDDVE) are enriched in acidic residues. The FCP1 homology domain occupies 118–292 (QRQRKLYLVL…DHRYKSLSEL (175 aa)). A BRCT domain is found at 337–429 (VRKEILKGCK…MKQPEENFGL (93 aa)).

Interacts with RAP74. Requires Mg(2+) as cofactor. Co(2+) serves as cofactor. The cofactor is Mn(2+).

It localises to the nucleus. The enzyme catalyses O-phospho-L-seryl-[protein] + H2O = L-seryl-[protein] + phosphate. It carries out the reaction O-phospho-L-threonyl-[protein] + H2O = L-threonyl-[protein] + phosphate. Processively dephosphorylates 'Ser-2' and/or 'Ser-5' of the heptad repeats YSPTSPS in the C-terminal domain of the largest RNA polymerase II subunit (RPB1). This promotes the activity of RNA polymerase II. Required for normal plant growth. The chain is RNA polymerase II C-terminal domain phosphatase-like 4 (CPL4) from Arabidopsis thaliana (Mouse-ear cress).